The chain runs to 90 residues: MKPMRQKNTRAQGNKSISNALASKRKVSKNQVVFFDYRDERKLKRFINDQGKIIPRRITGLTAKEQNLLTHSVKWARFLAVIPYVADEYK.

The segment at 1 to 23 (MKPMRQKNTRAQGNKSISNALAS) is disordered. Residues 9 to 21 (TRAQGNKSISNAL) show a composition bias toward polar residues.

Belongs to the bacterial ribosomal protein bS18 family. As to quaternary structure, part of the 30S ribosomal subunit. Forms a tight heterodimer with protein bS6.

In terms of biological role, binds as a heterodimer with protein bS6 to the central domain of the 16S rRNA, where it helps stabilize the platform of the 30S subunit. This is Small ribosomal subunit protein bS18 from Chlorobium luteolum (strain DSM 273 / BCRC 81028 / 2530) (Pelodictyon luteolum).